Reading from the N-terminus, the 475-residue chain is Putative aldehyde dehydrogenase SSP0762 (475 aa).

Position 201–207 (201–207) interacts with NAD(+); it reads GDGQGVG. Residues glutamate 245 and cysteine 279 contribute to the active site.

The protein belongs to the aldehyde dehydrogenase family.

The catalysed reaction is an aldehyde + NAD(+) + H2O = a carboxylate + NADH + 2 H(+). This chain is Putative aldehyde dehydrogenase SSP0762, found in Staphylococcus saprophyticus subsp. saprophyticus (strain ATCC 15305 / DSM 20229 / NCIMB 8711 / NCTC 7292 / S-41).